Reading from the N-terminus, the 102-residue chain is Large ribosomal subunit protein bL21 (102 aa).

It belongs to the bacterial ribosomal protein bL21 family. As to quaternary structure, part of the 50S ribosomal subunit. Contacts protein L20.

Functionally, this protein binds to 23S rRNA in the presence of protein L20. The polypeptide is Large ribosomal subunit protein bL21 (Geotalea daltonii (strain DSM 22248 / JCM 15807 / FRC-32) (Geobacter daltonii)).